Reading from the N-terminus, the 127-residue chain is Large ribosomal subunit protein bL17 (127 aa).

This sequence belongs to the bacterial ribosomal protein bL17 family. As to quaternary structure, part of the 50S ribosomal subunit. Contacts protein L32.

In Stenotrophomonas maltophilia (strain K279a), this protein is Large ribosomal subunit protein bL17.